We begin with the raw amino-acid sequence, 614 residues long: Zinc metalloproteinase-disintegrin-like BmMP (614 aa).

An N-terminal signal peptide occupies residues 1–20 (MIQALLVTICLAVFPYQGSS). A propeptide spanning residues 21-188 (IILESGNVND…WESDEPIRNA (168 aa)) is cleaved from the precursor. Residue N187 is glycosylated (N-linked (GlcNAc...) asparagine). In terms of domain architecture, Peptidase M12B spans 205 to 401 (KYIEFYVAVD…DRPQCILNKP (197 aa)). Cystine bridges form between C316/C396, C356/C380, C359/C364, C412/C441, C423/C436, C425/C431, C435/C458, C449/C455, C454/C480, C467/C487, C474/C506, C499/C511, C518/C568, C533/C576, C546/C556, C563/C602, and C596/C607. A Zn(2+)-binding site is contributed by H341. Residue E342 is part of the active site. H345 and H351 together coordinate Zn(2+). Residues 409–495 (PAICGNYFVE…ECPTDIFRRN (87 aa)) form the Disintegrin domain. Positions 473-475 (DCD) match the D/ECD-tripeptide motif.

This sequence belongs to the venom metalloproteinase (M12B) family. P-III subfamily. P-IIIa sub-subfamily. As to quaternary structure, monomer. Zn(2+) is required as a cofactor. Expressed by the venom gland.

The protein resides in the secreted. Functionally, snake venom zinc metalloproteinase that inhibits platelet aggregation and degrades fibrinogen. In Bungarus multicinctus (Many-banded krait), this protein is Zinc metalloproteinase-disintegrin-like BmMP.